We begin with the raw amino-acid sequence, 152 residues long: Transcriptional regulator MraZ (152 aa).

SpoVT-AbrB domains follow at residues 5-51 (VNSI…PLPE) and 80-123 (AAEC…DEVL).

The protein belongs to the MraZ family. Forms oligomers.

It localises to the cytoplasm. It is found in the nucleoid. The chain is Transcriptional regulator MraZ from Methylococcus capsulatus (strain ATCC 33009 / NCIMB 11132 / Bath).